We begin with the raw amino-acid sequence, 827 residues long: Glycerol-3-phosphate acyltransferase (827 aa).

Residues 325 to 330 (CHRSHM) carry the HXXXXD motif motif.

This sequence belongs to the GPAT/DAPAT family.

It localises to the cell inner membrane. It catalyses the reaction sn-glycerol 3-phosphate + an acyl-CoA = a 1-acyl-sn-glycero-3-phosphate + CoA. The protein operates within phospholipid metabolism; CDP-diacylglycerol biosynthesis; CDP-diacylglycerol from sn-glycerol 3-phosphate: step 1/3. The chain is Glycerol-3-phosphate acyltransferase from Shigella boydii serotype 4 (strain Sb227).